Consider the following 175-residue polypeptide: uncharacterized protein (175 aa).

Residues Met1–Asp17 show a composition bias toward basic and acidic residues. The tract at residues Met1–Gly21 is disordered.

This is an uncharacterized protein from Bacillus thuringiensis subsp. kurstaki.